Here is a 314-residue protein sequence, read N- to C-terminus: Very long chain fatty acid elongase 4 (314 aa).

Residue asparagine 20 is glycosylated (N-linked (GlcNAc...) asparagine). Helical transmembrane passes span 42-62 (LMQSPWPTLSISTLYLLFVWL), 78-98 (VLIIYNFGMVLLNFFIFRELF), 127-147 (ALWWYFVSKGVEYLDTVFFIL), 165-185 (MFTLWWIGIKWVAGGQAFFGA), 188-208 (NSFIHVIMYSYYGLAAFGPWI), 217-237 (YLTMLQLVQFHVTIGHTALSL), and 247-267 (MHWALIAYAISFIFLFLNFYI). Residues 274-314 (KKPKTGKTAMNGISANGVSKSEKQLVIENGKKQKNGKAKGD) form a disordered region. Residues 293–304 (KSEKQLVIENGK) show a composition bias toward basic and acidic residues. The span at 305–314 (KQKNGKAKGD) shows a compositional bias: basic residues. Residues 310–314 (KAKGD) carry the Di-lysine motif motif.

Belongs to the ELO family. ELOVL4 subfamily. As to quaternary structure, oligomer. Post-translationally, N-glycosylated. In terms of tissue distribution, expressed mainly in retina. Also expressed in skin and thymus.

Its subcellular location is the endoplasmic reticulum membrane. It carries out the reaction a very-long-chain acyl-CoA + malonyl-CoA + H(+) = a very-long-chain 3-oxoacyl-CoA + CO2 + CoA. It catalyses the reaction hexacosanoyl-CoA + malonyl-CoA + H(+) = 3-oxooctacosanyol-CoA + CO2 + CoA. The catalysed reaction is octacosanoyl-CoA + malonyl-CoA + H(+) = 3-oxo-triacontanoyl-CoA + CO2 + CoA. The enzyme catalyses triacontanoyl-CoA + malonyl-CoA + H(+) = 3-oxo-dotriacontanoyl-CoA + CO2 + CoA. It carries out the reaction (19Z,22Z,25Z,28Z,31Z)-tetratriacontapentaenoyl-CoA + malonyl-CoA + H(+) = 3-oxo-(21Z,24Z,27Z,30Z,33Z)-hexatriacontapentaenoyl-CoA + CO2 + CoA. It catalyses the reaction (4Z,7Z,10Z,13Z,16Z,19Z)-docosahexaenoyl-CoA + malonyl-CoA + H(+) = 3-oxo-(6Z,9Z,12Z,15Z,18Z,21Z)-tetracosahexaenoyl-CoA + CO2 + CoA. The catalysed reaction is (7Z,10Z,13Z,16Z)-docosatetraenoyl-CoA + malonyl-CoA + H(+) = (9Z,12Z,15Z,18Z)-3-oxotetracosatetraenoyl-CoA + CO2 + CoA. The enzyme catalyses (11Z,14Z,17Z,20Z,23Z)-hexacosapentaenoyl-CoA + malonyl-CoA + H(+) = 3-oxo-(13Z,16Z,19Z,22Z,25Z)-octacosapentaenoyl-CoA + CO2 + CoA. It carries out the reaction (13Z,16Z,19Z,22Z,25Z)-octacosapentaenoyl-CoA + malonyl-CoA + H(+) = 3-oxo-(15Z,18Z,21Z,24Z,27Z)-triacontapentaenoyl-CoA + CO2 + CoA. It catalyses the reaction (15Z,18Z,21Z,24Z,27Z)-triacontapentaenoyl-CoA + malonyl-CoA + H(+) = 3-oxo-(17Z,20Z,23Z,26Z,29Z)-dotriacontapentaenoyl-CoA + CO2 + CoA. The catalysed reaction is (17Z,20Z,23Z,26Z,29Z)-dotriacontapentaenoyl-CoA + malonyl-CoA + H(+) = 3-oxo-(19Z,22Z,25Z,28Z,31Z)-tetratriacontapentaenoyl-CoA + CO2 + CoA. The enzyme catalyses (21Z,24Z,27Z,30Z,33Z)-hexatriacontapentaenoyl-CoA + malonyl-CoA + H(+) = 3-oxo-(23Z,26Z,29Z,32Z,35Z)-octatriacontapentaenoyl-CoA + CO2 + CoA. It carries out the reaction (11Z,14Z,17Z,20Z)-hexacosatetraenoyl-CoA + malonyl-CoA + H(+) = (13Z,16Z,19Z,22Z)-3-oxooctacosatetraenoyl-CoA + CO2 + CoA. It catalyses the reaction (13Z,16Z,19Z,22Z)-octacosatetraenoyl-CoA + malonyl-CoA + H(+) = 3-oxo-(15Z,18Z,21Z,24Z)-triacontatetraenoyl-CoA + CO2 + CoA. The catalysed reaction is (15Z,18Z,21Z,24Z)-triacontatetraenoyl-CoA + malonyl-CoA + H(+) = 3-oxo-(17Z,20Z,23Z,26Z)-dotriacontatetraenoyl-CoA + CO2 + CoA. The enzyme catalyses (17Z,20Z,23Z,26Z)-dotriacontatetraenoyl-CoA + malonyl-CoA + H(+) = 3-oxo-(19Z,22Z,25Z,28Z)-tetratriacontatetraenoyl-CoA + CO2 + CoA. It carries out the reaction (19Z,22Z,25Z,28Z)-tetratriacontatetraenoyl-CoA + malonyl-CoA + H(+) = 3-oxo-(21Z,24Z,27Z,30Z)-hexatriacontatetraenoyl-CoA + CO2 + CoA. It catalyses the reaction (21Z,24Z,27Z,30Z)-hexatriacontatetraenoyl-CoA + malonyl-CoA + H(+) = 3-oxo-(23Z,26Z,29Z,32Z)-octatriacontatetraenoyl-CoA + CO2 + CoA. The catalysed reaction is (6Z,9Z,12Z,15Z,18Z,21Z)-tetracosahexaenoyl-CoA + malonyl-CoA + H(+) = 3-oxo-(8Z,11Z,14Z,17Z,20Z,23Z)-hexacosahexaenoyl-CoA + CO2 + CoA. The enzyme catalyses (8Z,11Z,14Z,17Z,20Z,23Z)-hexacosahexaenoyl-CoA + malonyl-CoA + H(+) = 3-oxo-(10Z,13Z,16Z,19Z,22Z,25Z)-octacosahexaenoyl-CoA + CO2 + CoA. It carries out the reaction (10Z,13Z,16Z,19Z,22Z,25Z)-octacosahexaenoyl-CoA + malonyl-CoA + H(+) = 3-oxo-(12Z,15Z,18Z,21Z,24Z,27Z)-triacontahexaenoyl-CoA + CO2 + CoA. It catalyses the reaction (12Z,15Z,18Z,21Z,24Z,27Z)-triacontahexaenoyl-CoA + malonyl-CoA + H(+) = 3-oxo-(14Z,17Z,20Z,23Z,26Z,29Z)-dotriacontahexaenoyl-CoA + CO2 + CoA. The catalysed reaction is (14Z,17Z,20Z,23Z,26Z,29Z)-dotriacontahexaenoyl-CoA + malonyl-CoA + H(+) = 3-oxo-(16Z,19Z,22Z,25Z,28Z,31Z)-tetratriacontahexaenoyl-CoA + CO2 + CoA. The enzyme catalyses (16Z,19Z,22Z,25Z,28Z,31Z)-tetratriacontahexaenoyl-CoA + malonyl-CoA + H(+) = 3-oxo-(18Z,21Z,24Z,27Z,30Z,33Z)-hexatriacontahexaenoyl-CoA + CO2 + CoA. It carries out the reaction (9Z,12Z,15Z,18Z,21Z)-tetracosapentaenoyl-CoA + malonyl-CoA + H(+) = 3-oxo-(11Z,14Z,17Z,20Z,23Z)-hexacosapentaenoyl-CoA + CO2 + CoA. Its pathway is lipid metabolism; fatty acid biosynthesis. Functionally, catalyzes the first and rate-limiting reaction of the four reactions that constitute the long-chain fatty acids elongation cycle. This endoplasmic reticulum-bound enzymatic process allows the addition of 2 carbons to the chain of long- and very long-chain fatty acids (VLCFAs) per cycle. Condensing enzyme that catalyzes the synthesis of very long chain saturated (VLC-SFA) and polyunsaturated (PUFA) fatty acids that are involved in multiple biological processes as precursors of membrane lipids and lipid mediators. May play a critical role in early brain and skin development. In Macaca fascicularis (Crab-eating macaque), this protein is Very long chain fatty acid elongase 4.